We begin with the raw amino-acid sequence, 473 residues long: Zinc finger and SCAN domain-containing protein 21 (473 aa).

K27 is covalently cross-linked (Glycyl lysine isopeptide (Lys-Gly) (interchain with G-Cter in SUMO2)). Residues 45–127 (RQRFRQFGYH…TLLEDLEREL (83 aa)) form the SCAN box domain. A disordered region spans residues 127–169 (LDEPGHQVSTPPNEQKPVWEKISSSGTAKESPSSMQPQPLETS). Residues 148–167 (ISSSGTAKESPSSMQPQPLE) show a composition bias toward polar residues. Glycyl lysine isopeptide (Lys-Gly) (interchain with G-Cter in SUMO2) cross-links involve residues K221 and K232. The tract at residues 244–272 (LENEKGTKPPLQEAGSKKGRESVPTKPTP) is disordered. Residues 258–272 (GSKKGRESVPTKPTP) are compositionally biased toward basic and acidic residues. 7 consecutive C2H2-type zinc fingers follow at residues 277 to 299 (YICA…RRTH), 305 to 327 (YVCT…YRTH), 333 to 354 (YDCK…QRMH), 360 to 382 (YQCK…YRIH), 388 to 410 (YQCN…QRLH), 416 to 438 (YKCK…HRIH), and 444 to 466 (YWCH…QRVH). A Glycyl lysine isopeptide (Lys-Gly) (interchain with G-Cter in SUMO2) cross-link involves residue K349.

Belongs to the krueppel C2H2-type zinc-finger protein family.

The protein resides in the nucleus. In terms of biological role, strong transcriptional activator. Plays an important role in spermatogenesis; essential for the progression of meiotic prophase I in spermatocytes. This Homo sapiens (Human) protein is Zinc finger and SCAN domain-containing protein 21 (ZSCAN21).